A 546-amino-acid polypeptide reads, in one-letter code: Chaperonin GroEL 1 (546 aa).

ATP contacts are provided by residues 29–32 (TIGP), 86–90 (DGTTT), G413, 477–479 (NAA), and D493. Residues 523–546 (PAEPAPQDGHGHGHGHSHPQGPGF) form a disordered region.

This sequence belongs to the chaperonin (HSP60) family. As to quaternary structure, forms a cylinder of 14 subunits composed of two heptameric rings stacked back-to-back. Interacts with the co-chaperonin GroES.

The protein resides in the cytoplasm. The enzyme catalyses ATP + H2O + a folded polypeptide = ADP + phosphate + an unfolded polypeptide.. Functionally, together with its co-chaperonin GroES, plays an essential role in assisting protein folding. The GroEL-GroES system forms a nano-cage that allows encapsulation of the non-native substrate proteins and provides a physical environment optimized to promote and accelerate protein folding. In Frankia casuarinae (strain DSM 45818 / CECT 9043 / HFP020203 / CcI3), this protein is Chaperonin GroEL 1.